The chain runs to 398 residues: Phosphoglycerate kinase (398 aa).

Substrate is bound by residues 21–23 (DFN), R36, 59–62 (HLGR), R119, and R157. Residues K208, G296, E327, and 354 to 357 (GGDS) contribute to the ATP site.

It belongs to the phosphoglycerate kinase family. As to quaternary structure, monomer.

The protein resides in the cytoplasm. The enzyme catalyses (2R)-3-phosphoglycerate + ATP = (2R)-3-phospho-glyceroyl phosphate + ADP. The protein operates within carbohydrate degradation; glycolysis; pyruvate from D-glyceraldehyde 3-phosphate: step 2/5. In Streptococcus pyogenes serotype M1, this protein is Phosphoglycerate kinase (pgk).